The chain runs to 105 residues: MAQLKVVTRDGSLHEFEAPDGYTVMEAIRDQGIDELLAICGGCCSCATCHVFVEEAFLDKLPPLKGDEDDLLDSSDHRQANSRLSCQLPIGPELGGMTVTIAPED.

The region spanning 2–105 (AQLKVVTRDG…GMTVTIAPED (104 aa)) is the 2Fe-2S ferredoxin-type domain. Residues C40, C46, C49, and C86 each coordinate [2Fe-2S] cluster.

Belongs to the adrenodoxin/putidaredoxin family. Monomer. The three-component monooxygenase is composed of an oxygenase (LigXa), a ferredoxin (LigXc) and a ferredoxin reductase (LigXd). It depends on [2Fe-2S] cluster as a cofactor.

It carries out the reaction 5,5'-dehydrodivanillate + NADH + O2 + H(+) = 2,2',3-trihydroxy-3'-methoxy-5,5'-dicarboxybiphenyl + formaldehyde + NAD(+) + H2O. Its function is as follows. Involved in the catabolism of 5,5'-dehydrodivanillate (DDVA), an intermediate in the biodegradation of lignin. Part of a three-component monooxygenase that catalyzes the O-demethylation of DDVA, leading to the formation of 2,2',3-trihydroxy-3'-methoxy-5,5'-dicarboxybiphenyl (OH-DDVA). LigXc probably functions as an intermediate electron transfer protein between LigXd and LigXa. The protein is 5,5'-dehydrodivanillate O-demethylase ferredoxin subunit of Sphingobium sp. (strain NBRC 103272 / SYK-6).